A 268-amino-acid polypeptide reads, in one-letter code: 4-hydroxy-tetrahydrodipicolinate reductase (268 aa).

NAD(+)-binding positions include 10–15 (GASGRM) and D36. R37 serves as a coordination point for NADP(+). NAD(+) is bound by residues 99-101 (GTT) and 123-126 (SANM). The Proton donor/acceptor role is filled by H156. Position 157 (H157) interacts with (S)-2,3,4,5-tetrahydrodipicolinate. The active-site Proton donor is the K160. A (S)-2,3,4,5-tetrahydrodipicolinate-binding site is contributed by 166–167 (GT).

This sequence belongs to the DapB family.

Its subcellular location is the cytoplasm. The enzyme catalyses (S)-2,3,4,5-tetrahydrodipicolinate + NAD(+) + H2O = (2S,4S)-4-hydroxy-2,3,4,5-tetrahydrodipicolinate + NADH + H(+). It carries out the reaction (S)-2,3,4,5-tetrahydrodipicolinate + NADP(+) + H2O = (2S,4S)-4-hydroxy-2,3,4,5-tetrahydrodipicolinate + NADPH + H(+). Its pathway is amino-acid biosynthesis; L-lysine biosynthesis via DAP pathway; (S)-tetrahydrodipicolinate from L-aspartate: step 4/4. Functionally, catalyzes the conversion of 4-hydroxy-tetrahydrodipicolinate (HTPA) to tetrahydrodipicolinate. The chain is 4-hydroxy-tetrahydrodipicolinate reductase from Burkholderia thailandensis (strain ATCC 700388 / DSM 13276 / CCUG 48851 / CIP 106301 / E264).